Reading from the N-terminus, the 466-residue chain is Asparagine--tRNA ligase (466 aa).

Belongs to the class-II aminoacyl-tRNA synthetase family. As to quaternary structure, homodimer.

It localises to the cytoplasm. It carries out the reaction tRNA(Asn) + L-asparagine + ATP = L-asparaginyl-tRNA(Asn) + AMP + diphosphate + H(+). This chain is Asparagine--tRNA ligase, found in Aeromonas hydrophila subsp. hydrophila (strain ATCC 7966 / DSM 30187 / BCRC 13018 / CCUG 14551 / JCM 1027 / KCTC 2358 / NCIMB 9240 / NCTC 8049).